We begin with the raw amino-acid sequence, 154 residues long: Ascorbate-specific PTS system EIIA component (154 aa).

The 145-residue stretch at 6–150 (SLAENNSIRL…QEVLDLIDRT (145 aa)) folds into the PTS EIIA type-2 domain. Histidine 68 (tele-phosphohistidine intermediate) is an active-site residue. Residue histidine 68 is modified to Phosphohistidine.

It is found in the cytoplasm. The phosphoenolpyruvate-dependent sugar phosphotransferase system (sugar PTS), a major carbohydrate active transport system, catalyzes the phosphorylation of incoming sugar substrates concomitantly with their translocation across the cell membrane. The enzyme II UlaABC PTS system is involved in ascorbate transport. The polypeptide is Ascorbate-specific PTS system EIIA component (ulaC) (Salmonella choleraesuis (strain SC-B67)).